The following is a 236-amino-acid chain: Aminopyrimidine aminohydrolase (236 aa).

Residue Asp-44 coordinates substrate. Catalysis depends on Cys-135, which acts as the Nucleophile. Positions 139 and 163 each coordinate substrate. Glu-205 (proton donor) is an active-site residue.

The protein belongs to the TenA family. As to quaternary structure, homotetramer.

It catalyses the reaction 4-amino-5-aminomethyl-2-methylpyrimidine + H2O = 4-amino-5-hydroxymethyl-2-methylpyrimidine + NH4(+). It carries out the reaction thiamine + H2O = 5-(2-hydroxyethyl)-4-methylthiazole + 4-amino-5-hydroxymethyl-2-methylpyrimidine + H(+). It functions in the pathway cofactor biosynthesis; thiamine diphosphate biosynthesis. Its function is as follows. Catalyzes an amino-pyrimidine hydrolysis reaction at the C5' of the pyrimidine moiety of thiamine compounds, a reaction that is part of a thiamine salvage pathway. Thus, catalyzes the conversion of 4-amino-5-aminomethyl-2-methylpyrimidine to 4-amino-5-hydroxymethyl-2-methylpyrimidine (HMP). To a lesser extent, is also able to catalyze the hydrolytic cleavage of thiamine; however, this thiaminase activity is unlikely to be physiologically relevant. Therefore, is involved in the regeneration of the thiamine pyrimidine from thiamine degraded products present in the environment, rather than in thiamine degradation. This Bacillus subtilis (strain 168) protein is Aminopyrimidine aminohydrolase.